Reading from the N-terminus, the 393-residue chain is Phosphoglycerate kinase (393 aa).

Substrate is bound by residues Asp-21–Asn-23, His-59–Arg-62, Arg-118, and Arg-151. Residues Lys-201, Glu-323, and Gly-349 to Thr-352 each bind ATP.

Belongs to the phosphoglycerate kinase family. As to quaternary structure, monomer.

The protein resides in the cytoplasm. The catalysed reaction is (2R)-3-phosphoglycerate + ATP = (2R)-3-phospho-glyceroyl phosphate + ADP. It functions in the pathway carbohydrate degradation; glycolysis; pyruvate from D-glyceraldehyde 3-phosphate: step 2/5. This is Phosphoglycerate kinase from Pelotomaculum thermopropionicum (strain DSM 13744 / JCM 10971 / SI).